The chain runs to 102 residues: Small ribosomal subunit protein uS17 (102 aa).

Positions 1–15 are enriched in polar residues; that stretch reads MTDETASQEASQSTD. Positions 1 to 20 are disordered; it reads MTDETASQEASQSTDAAAPA.

It belongs to the universal ribosomal protein uS17 family. In terms of assembly, part of the 30S ribosomal subunit.

Functionally, one of the primary rRNA binding proteins, it binds specifically to the 5'-end of 16S ribosomal RNA. This Frankia casuarinae (strain DSM 45818 / CECT 9043 / HFP020203 / CcI3) protein is Small ribosomal subunit protein uS17.